A 225-amino-acid polypeptide reads, in one-letter code: Lipid A 4'-phosphatase (225 aa).

6 consecutive transmembrane segments (helical) span residues 29–49, 51–71, 110–130, 136–156, 160–180, and 203–223; these read SAFT…YILL, NFHW…ITFA, FGFP…LICL, LSIF…YLGL, GDLV…YFIA, and TEVM…YSIV.

Belongs to the lipid A LpxF 4'-phosphatase family.

The protein resides in the cell inner membrane. The protein operates within bacterial outer membrane biogenesis; LPS lipid A biosynthesis. Its function is as follows. Probably removes the 4'-phosphate group from lipid A. Removal of this phosphate group confers resistance to cationic antimicrobial peptides (CAMPs), inflammation-associated peptides produced by the human host. This LPS modification helps maintain the stability of this commensal bacterium in gut microbiota. This is Lipid A 4'-phosphatase from Bacteroides thetaiotaomicron (strain ATCC 29148 / DSM 2079 / JCM 5827 / CCUG 10774 / NCTC 10582 / VPI-5482 / E50).